Reading from the N-terminus, the 503-residue chain is Annexin A11 (503 aa).

Composition is skewed to pro residues over residues 80-117 (GYPP…PGMP) and 123-167 (PGAP…PVPS). A disordered region spans residues 80–172 (GYPPVPPGGF…QPVPSYPGYS (93 aa)). Annexin repeat units follow at residues 198–269 (FDPL…ALMK), 270–341 (TPVL…SLSQ), 353–425 (SLVQ…AVVK), and 429–500 (NTPA…KICG). N6-acetyllysine is present on residues Lys-246 and Lys-253. An N6-acetyllysine modification is found at Lys-477.

This sequence belongs to the annexin family. Interacts with S100A6. Interacts with PDCD6 in a calcium-dependent manner. Interacts with KIF23 during cytokinesis.

The protein localises to the cytoplasm. The protein resides in the melanosome. It is found in the nucleus envelope. Its subcellular location is the nucleus. It localises to the nucleoplasm. The protein localises to the cytoskeleton. The protein resides in the spindle. Functionally, required for midbody formation and completion of the terminal phase of cytokinesis. Binds specifically to calcyclin in a calcium-dependent manner. This is Annexin A11 (Anxa11) from Mus musculus (Mouse).